The primary structure comprises 479 residues: Ribosomal lysine N-methyltransferase 2 (479 aa).

The region spanning 22-325 is the SET domain; that stretch reads PNISICESPE…INEELFLNYG (304 aa). Residue tyrosine 324 coordinates S-adenosyl-L-methionine.

The protein belongs to the class V-like SAM-binding methyltransferase superfamily. RKM2 family.

S-adenosyl-L-methionine-dependent protein-lysine N-methyltransferase that trimethylates 60S ribosomal protein L12 (RPL12A and RPL12B) at 'Lys-4' and 'Lys-11'. This chain is Ribosomal lysine N-methyltransferase 2, found in Saccharomyces cerevisiae (strain ATCC 204508 / S288c) (Baker's yeast).